Here is a 350-residue protein sequence, read N- to C-terminus: MGAGASAEEKHSRELEKKLKEDADKDARTVKLLLLGAGESGKSTIVKQMKIIHQDGYSVEECLEFIAIIYGNTLQSMIAIVKAMNTLNIQFGDPARQDDARKLMHLADTIDEGSMPKEMSDIIGRLWKDTGIQACFDRASEYQLNDSAGYYLNDLDRLVIPGYVPTEQDVLRSRVKTTGIIETQFGLKDLNFRMFDVGGQRSERKKWIHCFEGVTCIIFIAALSAYDMVLVEDDEVNRMHESLHLFNSICNHRYFATTSIVLFLNKKDVFTEKIKKAHLSICFPDYDGPNTYEDAGNYIKTQFLELNMRRDVKEIYSHMTCATDTENVKFVFDAVTDIIIKENLKDCGLF.

The segment at 1–21 (MGAGASAEEKHSRELEKKLKE) is disordered. A lipid anchor (N-myristoyl glycine) is attached at G2. Residues 7 to 21 (AEEKHSRELEKKLKE) show a composition bias toward basic and acidic residues. Residues 28 to 350 (RTVKLLLLGA…KENLKDCGLF (323 aa)) form the G-alpha domain. A G1 motif region spans residues 31–44 (KLLLLGAGESGKST). GTP is bound by residues 36 to 43 (GAGESGKS), 171 to 177 (LRSRVKT), 196 to 200 (DVGGQ), 265 to 268 (NKKD), and A322. Mg(2+)-binding residues include S43 and T177. Residues 169-177 (DVLRSRVKT) are G2 motif. Residues 192 to 201 (FRMFDVGGQR) form a G3 motif region. The G4 motif stretch occupies residues 261–268 (VLFLNKKD). A G5 motif region spans residues 320 to 325 (TCATDT).

It belongs to the G-alpha family. G(i/o/t/z) subfamily. As to quaternary structure, g proteins are composed of 3 units; alpha, beta and gamma. The alpha chain contains the guanine nucleotide binding site.

In terms of biological role, guanine nucleotide-binding proteins (G proteins) are involved as modulators or transducers in various transmembrane signaling systems. Transducin is an amplifier and one of the transducers of a visual impulse that performs the coupling between rhodopsin and cGMP-phosphodiesterase. The protein is Guanine nucleotide-binding protein G(t) subunit alpha (gnat) of Xenopus laevis (African clawed frog).